The following is a 527-amino-acid chain: Phospholipase A1-Igamma3, chloroplastic (527 aa).

Residues 1–52 constitute a chloroplast transit peptide; the sequence is MASLSLPITLKNPRFFSSSPQNIFKTQPQTLVLTTKFKTCSIICSSSCTSIS. Over residues 55–65 the composition is skewed to low complexity; that stretch reads TTQQKQSNKQT. The interval 55 to 82 is disordered; sequence TTQQKQSNKQTHVSDNKREEKAEEEEEE. Residues 66-75 are compositionally biased toward basic and acidic residues; it reads HVSDNKREEK. Residues 300–304 carry the GXSXG motif; it reads GHSLG. Catalysis depends on Ser302, which acts as the Acyl-ester intermediate. Active-site charge relay system residues include Asp366 and His423.

This sequence belongs to the AB hydrolase superfamily. Lipase family. Highly expressed in flowers. Lower levels in seedlings, leaves and stems.

The protein localises to the plastid. It is found in the chloroplast. It carries out the reaction 1,2-dihexadecanoyl-sn-glycero-3-phosphocholine + H2O = 2-hexadecanoyl-sn-glycero-3-phosphocholine + hexadecanoate + H(+). The catalysed reaction is a 1,2-diacyl-3-O-(beta-D-galactosyl)-sn-glycerol + H2O = an acyl-3-O-(beta-D-galactosyl)-sn-glycerol + a fatty acid + H(+). The enzyme catalyses a 1,2-diacyl-3-O-[alpha-D-galactosyl-(1-&gt;6)-beta-D-galactosyl]-sn-glycerol + H2O = acyl-3-O-[alpha-D-galactosyl-(1-&gt;6)-beta-D-galactosyl]-sn-glycerol + a fatty acid + H(+). Functionally, acylhydrolase that catalyzes the hydrolysis of phosphatidylcholine at the sn-1 position. Moderate activity toward phosphatidylcholine (PC), monogalactosyldiacylglycerol (MGDG), digalactosyldiacylglycerol (DGDG) and triacylglycerol (TAG). This Arabidopsis thaliana (Mouse-ear cress) protein is Phospholipase A1-Igamma3, chloroplastic.